A 676-amino-acid polypeptide reads, in one-letter code: Ribosome quality control complex subunit TCF25 (676 aa).

2 disordered regions span residues 1 to 59 (MSRR…VRVN) and 85 to 147 (LTDA…ENGL). Over residues 123 to 136 (GKLRKKKKKQKNKK) the composition is skewed to basic residues. Residue Ser602 is modified to Phosphoserine.

The protein belongs to the TCF25 family. Component of the ribosome quality control complex (RQC), composed of the E3 ubiquitin ligase LTN1, TCF25 and NEMF associated with the 60S ribosomal subunit. Interacts (via C-terminus) with NFATC4; the interaction leads to suppresson of NFATC4 transcription factor activity and is reduced following stimulation with angiotensin-2. Interacts with XIAP. As to expression, in the embryo, widely expressed with highest levels in brain. In the adult, highest expression is found in the heart. Repressed in cardiac tissue of patients with heart failure (at protein level). mRNA levels in the heart are unchanged in patients with heart failure.

The protein localises to the nucleus. The protein resides in the cytoplasm. Its subcellular location is the cytosol. Component of the ribosome quality control complex (RQC), a ribosome-associated complex that mediates ubiquitination and extraction of incompletely synthesized nascent chains for proteasomal degradation. In the RQC complex, required to promote formation of 'Lys-48'-linked polyubiquitin chains during ubiquitination of incompletely synthesized proteins by LTN1. May negatively regulate the calcineurin-NFAT signaling cascade by suppressing the activity of transcription factor NFATC4. May play a role in cell death control. The sequence is that of Ribosome quality control complex subunit TCF25 from Homo sapiens (Human).